The following is a 38-amino-acid chain: Large ribosomal subunit protein bL36 (38 aa).

The protein belongs to the bacterial ribosomal protein bL36 family.

In Pseudoalteromonas atlantica (strain T6c / ATCC BAA-1087), this protein is Large ribosomal subunit protein bL36.